Reading from the N-terminus, the 248-residue chain is PF03932 family protein CutC (248 aa).

It belongs to the CutC family. Homodimer.

It localises to the cytoplasm. This is PF03932 family protein CutC from Escherichia coli (strain 55989 / EAEC).